A 430-amino-acid chain; its full sequence is Asparagine--tRNA ligase (430 aa).

This sequence belongs to the class-II aminoacyl-tRNA synthetase family. In terms of assembly, homodimer.

Its subcellular location is the cytoplasm. It catalyses the reaction tRNA(Asn) + L-asparagine + ATP = L-asparaginyl-tRNA(Asn) + AMP + diphosphate + H(+). The sequence is that of Asparagine--tRNA ligase from Staphylococcus aureus (strain MRSA252).